A 277-amino-acid polypeptide reads, in one-letter code: Shikimate dehydrogenase (NADP(+)) (277 aa).

Residues S15–S17 and T62 each bind shikimate. Residue K66 is the Proton acceptor of the active site. Shikimate-binding residues include N87 and D102. Residues G127–A131, N151–K156, and I219 each bind NADP(+). A shikimate-binding site is contributed by Y221. G242 contributes to the NADP(+) binding site.

Belongs to the shikimate dehydrogenase family. In terms of assembly, homodimer.

It carries out the reaction shikimate + NADP(+) = 3-dehydroshikimate + NADPH + H(+). It functions in the pathway metabolic intermediate biosynthesis; chorismate biosynthesis; chorismate from D-erythrose 4-phosphate and phosphoenolpyruvate: step 4/7. In terms of biological role, involved in the biosynthesis of the chorismate, which leads to the biosynthesis of aromatic amino acids. Catalyzes the reversible NADPH linked reduction of 3-dehydroshikimate (DHSA) to yield shikimate (SA). The protein is Shikimate dehydrogenase (NADP(+)) of Bacillus thuringiensis subsp. konkukian (strain 97-27).